Here is a 137-residue protein sequence, read N- to C-terminus: Large ribosomal subunit protein uL16 (137 aa).

It belongs to the universal ribosomal protein uL16 family. Part of the 50S ribosomal subunit.

Functionally, binds 23S rRNA and is also seen to make contacts with the A and possibly P site tRNAs. The chain is Large ribosomal subunit protein uL16 from Pseudomonas paraeruginosa (strain DSM 24068 / PA7) (Pseudomonas aeruginosa (strain PA7)).